The sequence spans 287 residues: PAK4-inhibitor INKA1 (287 aa).

Disordered stretches follow at residues 22-59 and 138-157; these read GRDT…LEED and SRAP…KSTP. The segment covering 35-50 has biased composition (polar residues); it reads QPTSQTGPDVQPSHQL. Low complexity predominate over residues 138–147; that stretch reads SRAPVASVPP. 2 inka box regions span residues 168–205 and 261–287; these read EAED…ELPE and PADV…VSYL.

It belongs to the INKA family. In terms of assembly, interacts with PAK4.

It localises to the nucleus. Its subcellular location is the cytoplasm. Inhibitor of the serine/threonine-protein kinase PAK4. Acts by binding PAK4 in a substrate-like manner, inhibiting the protein kinase activity. The chain is PAK4-inhibitor INKA1 from Homo sapiens (Human).